Here is a 416-residue protein sequence, read N- to C-terminus: Serine hydroxymethyltransferase (416 aa).

Residues Leu-118 and 122–124 contribute to the (6S)-5,6,7,8-tetrahydrofolate site; that span reads GHL. Residue Lys-226 is modified to N6-(pyridoxal phosphate)lysine. (6S)-5,6,7,8-tetrahydrofolate-binding positions include Glu-242 and 350 to 352; that span reads SPF.

This sequence belongs to the SHMT family. As to quaternary structure, homodimer. Requires pyridoxal 5'-phosphate as cofactor.

It localises to the cytoplasm. The catalysed reaction is (6R)-5,10-methylene-5,6,7,8-tetrahydrofolate + glycine + H2O = (6S)-5,6,7,8-tetrahydrofolate + L-serine. Its pathway is one-carbon metabolism; tetrahydrofolate interconversion. It participates in amino-acid biosynthesis; glycine biosynthesis; glycine from L-serine: step 1/1. Functionally, catalyzes the reversible interconversion of serine and glycine with tetrahydrofolate (THF) serving as the one-carbon carrier. This reaction serves as the major source of one-carbon groups required for the biosynthesis of purines, thymidylate, methionine, and other important biomolecules. Also exhibits THF-independent aldolase activity toward beta-hydroxyamino acids, producing glycine and aldehydes, via a retro-aldol mechanism. The chain is Serine hydroxymethyltransferase from Wolinella succinogenes (strain ATCC 29543 / DSM 1740 / CCUG 13145 / JCM 31913 / LMG 7466 / NCTC 11488 / FDC 602W) (Vibrio succinogenes).